Here is a 238-residue protein sequence, read N- to C-terminus: HTH-type transcriptional regulator TreR (238 aa).

Positions methionine 1–arginine 71 constitute an HTH gntR-type domain. The segment at residues glutamate 31 to histidine 50 is a DNA-binding region (H-T-H motif).

Dimer of dimers.

Repressor for the trePA operon. It is able to bind trehalose-6-phosphate. In Bacillus subtilis (strain 168), this protein is HTH-type transcriptional regulator TreR (treR).